Here is a 470-residue protein sequence, read N- to C-terminus: MAKKKTSSSMARSQLAALLISLCFLSLASNAVGWSRRGEREEEDERRRHGGEGGRPYHFGEESFRHWTRTRHGRFSVLERFPDEQVVGAAVGGYRVAVLEAAPRAFLQPSHYDADEVFYVKEGEGVIVLLREGRKESFCVREGDAMVIPAGAIVYSANTHSSKWFRVVMLLNPVSTPGHFEEYFPVGGDRPESFFSAFSDDVLQAAFNTRREELEKVFERQREGGEITTAPEEQIRELSKSCSRGGGGGSGSEWEIKPSSLTGKSPYFSNNHGKLFELTGDECRHLKKLDLQIGLANITRGSMIAPNYNTRATKLAVVLQGSGYFEMACPHVSGGGSSERREREREHGRRREEEQGEEEHGERGEKARRYHKVRAQVREGSVIVIPASHPATIVASEGESLAVVCFFVGANHDEKVFLAGRNSPLRQLDDPAKKLVFGGSAAREADRVLAAQPEQILLRGPHGRGSVSDM.

An N-terminal signal peptide occupies residues 1-34 (MAKKKTSSSMARSQLAALLISLCFLSLASNAVGW). The span at 36–52 (RRGEREEEDERRRHGGE) shows a compositional bias: basic and acidic residues. 2 disordered regions span residues 36–57 (RRGEREEEDERRRHGGEGGRPY) and 240–261 (KSCSRGGGGGSGSEWEIKPSSL). Cupin type-1 domains follow at residues 57–215 (YHFG…EELE) and 259–445 (SSLT…AREA). The N-linked (GlcNAc...) asparagine glycan is linked to Asn297. The disordered stretch occupies residues 330-368 (PHVSGGGSSERREREREHGRRREEEQGEEEHGERGEKAR). The segment covering 338–367 (SERREREREHGRRREEEQGEEEHGERGEKA) has biased composition (basic and acidic residues). 3 residues coordinate Zn(2+): His347, Glu352, and His360.

It belongs to the 7S seed storage protein family. Homotrimer. It depends on Zn(2+) as a cofactor.

The protein localises to the secreted. Its function is as follows. Seed storage protein. Globulin-like protein that acts as a zinc metalloprotease. Cleaves specifically between Leu-15 and Tyr-16 of insulin B chain, and Gln-1 and Leu-2 of neurotensin (NT) peptide in vitro. May play a role as an initiating endopeptidase in germinating seeds. The polypeptide is Cupincin (Oryza sativa subsp. indica (Rice)).